A 360-amino-acid chain; its full sequence is 3-dehydroquinate synthase (360 aa).

NAD(+) contacts are provided by residues 71–76, 105–109, 129–130, K142, K151, and 169–172; these read DGEQYK, GVVGD, TT, and TLNT. E184, H248, and H265 together coordinate Zn(2+).

The protein belongs to the sugar phosphate cyclases superfamily. Dehydroquinate synthase family. Co(2+) serves as cofactor. The cofactor is Zn(2+). Requires NAD(+) as cofactor.

Its subcellular location is the cytoplasm. It catalyses the reaction 7-phospho-2-dehydro-3-deoxy-D-arabino-heptonate = 3-dehydroquinate + phosphate. It functions in the pathway metabolic intermediate biosynthesis; chorismate biosynthesis; chorismate from D-erythrose 4-phosphate and phosphoenolpyruvate: step 2/7. Catalyzes the conversion of 3-deoxy-D-arabino-heptulosonate 7-phosphate (DAHP) to dehydroquinate (DHQ). This Coxiella burnetii (strain CbuK_Q154) (Coxiella burnetii (strain Q154)) protein is 3-dehydroquinate synthase.